The chain runs to 118 residues: Small ribosomal subunit protein uS13 (118 aa).

Positions 94–118 (GLPVRGQRTKTNARTRKGPRKPIKK) are disordered.

Belongs to the universal ribosomal protein uS13 family. Part of the 30S ribosomal subunit. Forms a loose heterodimer with protein S19. Forms two bridges to the 50S subunit in the 70S ribosome.

Its function is as follows. Located at the top of the head of the 30S subunit, it contacts several helices of the 16S rRNA. In the 70S ribosome it contacts the 23S rRNA (bridge B1a) and protein L5 of the 50S subunit (bridge B1b), connecting the 2 subunits; these bridges are implicated in subunit movement. Contacts the tRNAs in the A and P-sites. The polypeptide is Small ribosomal subunit protein uS13 (Salmonella paratyphi A (strain ATCC 9150 / SARB42)).